Reading from the N-terminus, the 258-residue chain is 4-hydroxy-tetrahydrodipicolinate reductase (258 aa).

NAD(+) contacts are provided by residues Gly8–Met13, Gly93–Thr95, and Ala117–Phe120. His149 (proton donor/acceptor) is an active-site residue. His150 serves as a coordination point for (S)-2,3,4,5-tetrahydrodipicolinate. Lys153 serves as the catalytic Proton donor. Gly159–Thr160 lines the (S)-2,3,4,5-tetrahydrodipicolinate pocket.

This sequence belongs to the DapB family.

The protein localises to the cytoplasm. The catalysed reaction is (S)-2,3,4,5-tetrahydrodipicolinate + NAD(+) + H2O = (2S,4S)-4-hydroxy-2,3,4,5-tetrahydrodipicolinate + NADH + H(+). It carries out the reaction (S)-2,3,4,5-tetrahydrodipicolinate + NADP(+) + H2O = (2S,4S)-4-hydroxy-2,3,4,5-tetrahydrodipicolinate + NADPH + H(+). It functions in the pathway amino-acid biosynthesis; L-lysine biosynthesis via DAP pathway; (S)-tetrahydrodipicolinate from L-aspartate: step 4/4. Functionally, catalyzes the conversion of 4-hydroxy-tetrahydrodipicolinate (HTPA) to tetrahydrodipicolinate. The chain is 4-hydroxy-tetrahydrodipicolinate reductase from Thermomicrobium roseum (strain ATCC 27502 / DSM 5159 / P-2).